A 329-amino-acid polypeptide reads, in one-letter code: GTP 3',8-cyclase (329 aa).

The region spanning 8–234 (AFARKFYYLR…QQRARSDGPA (227 aa)) is the Radical SAM core domain. Arg17 contributes to the GTP binding site. Cys24 and Cys28 together coordinate [4Fe-4S] cluster. Tyr30 serves as a coordination point for S-adenosyl-L-methionine. Cys31 is a binding site for [4Fe-4S] cluster. A GTP-binding site is contributed by Arg68. Gly72 serves as a coordination point for S-adenosyl-L-methionine. Thr99 contributes to the GTP binding site. Ser123 lines the S-adenosyl-L-methionine pocket. GTP is bound at residue Lys160. Met194 is an S-adenosyl-L-methionine binding site. Residues Cys257 and Cys260 each coordinate [4Fe-4S] cluster. GTP is bound at residue 262-264 (RLR). Cys274 serves as a coordination point for [4Fe-4S] cluster.

This sequence belongs to the radical SAM superfamily. MoaA family. Monomer and homodimer. It depends on [4Fe-4S] cluster as a cofactor.

It carries out the reaction GTP + AH2 + S-adenosyl-L-methionine = (8S)-3',8-cyclo-7,8-dihydroguanosine 5'-triphosphate + 5'-deoxyadenosine + L-methionine + A + H(+). It participates in cofactor biosynthesis; molybdopterin biosynthesis. Its function is as follows. Catalyzes the cyclization of GTP to (8S)-3',8-cyclo-7,8-dihydroguanosine 5'-triphosphate. This Pectobacterium atrosepticum (strain SCRI 1043 / ATCC BAA-672) (Erwinia carotovora subsp. atroseptica) protein is GTP 3',8-cyclase.